Here is a 240-residue protein sequence, read N- to C-terminus: MNAEKSPVNHNVDHKEIAKFEAVASRWWDLEGEFKPLHRINPLRLGYIAERAGGLFGKKVLDVGCGGGILAESMAREGATVTGLDMGFEPLQVAKLHALESGIQVDYVQETVEEHAAKHAGQYDVVTCMEMLEHVPDPQSVVRACAQLVKPGGDVFFSTLNRNGKSWLMAVVGAEYILRMVPKGTHDVKKFIKPAELLGWVDQTSLKERHMTGLHYNPITNTFKLGPGVDVNYMLHTQNK.

Positions 44, 64, 85, and 129 each coordinate S-adenosyl-L-methionine.

It belongs to the methyltransferase superfamily. UbiG/COQ3 family.

The enzyme catalyses a 3-demethylubiquinol + S-adenosyl-L-methionine = a ubiquinol + S-adenosyl-L-homocysteine + H(+). It catalyses the reaction a 3-(all-trans-polyprenyl)benzene-1,2-diol + S-adenosyl-L-methionine = a 2-methoxy-6-(all-trans-polyprenyl)phenol + S-adenosyl-L-homocysteine + H(+). The protein operates within cofactor biosynthesis; ubiquinone biosynthesis. Functionally, O-methyltransferase that catalyzes the 2 O-methylation steps in the ubiquinone biosynthetic pathway. This chain is Ubiquinone biosynthesis O-methyltransferase, found in Escherichia coli O6:K15:H31 (strain 536 / UPEC).